Here is a 559-residue protein sequence, read N- to C-terminus: Protein QNR-71 (559 aa).

The signal sequence occupies residues 1–22 (MSQAHRHLALLLPAEAVLCAAA). The Extracellular segment spans residues 23-487 (MRFQDVLSNG…NGGSSSGTTK (465 aa)). N92, N133, N145, N149, N192, N199, N248, N274, N307, and N311 each carry an N-linked (GlcNAc...) asparagine glycan. Positions 239-326 (VSMSQKHDRN…IIPVPCKPVT (88 aa)) constitute a PKD domain. Positions 329–356 (PSLPTPAVTTDASSNSDPSAPNEMAEDN) are disordered. Positions 335–347 (AVTTDASSNSDPS) are enriched in polar residues. N459 carries an N-linked (GlcNAc...) asparagine glycan. Residues 488-508 (GVFIFLGLLAVFGAIGAFVLY) traverse the membrane as a helical segment. The Cytoplasmic segment spans residues 509 to 559 (KRYKQYKPIERSAGQAENQEGLSAYVSNFKAFFFPKSTERNPLLKSKPGIV).

Belongs to the PMEL/NMB family. In terms of tissue distribution, melanocyte-specific, restricted to the pigmented layer of the retina and the epidermis.

The protein localises to the membrane. Functionally, could be involved in melanogenesis. In Coturnix japonica (Japanese quail), this protein is Protein QNR-71 (QNR-71).